Here is a 706-residue protein sequence, read N- to C-terminus: Ribosomal RNA large subunit methyltransferase K/L (706 aa).

One can recognise a THUMP domain in the interval 43–154 (LMYQSLLWSR…RDMASVALDL (112 aa)).

Belongs to the methyltransferase superfamily. RlmKL family.

Its subcellular location is the cytoplasm. It carries out the reaction guanosine(2445) in 23S rRNA + S-adenosyl-L-methionine = N(2)-methylguanosine(2445) in 23S rRNA + S-adenosyl-L-homocysteine + H(+). The enzyme catalyses guanosine(2069) in 23S rRNA + S-adenosyl-L-methionine = N(2)-methylguanosine(2069) in 23S rRNA + S-adenosyl-L-homocysteine + H(+). Specifically methylates the guanine in position 2445 (m2G2445) and the guanine in position 2069 (m7G2069) of 23S rRNA. This is Ribosomal RNA large subunit methyltransferase K/L from Yersinia pseudotuberculosis serotype IB (strain PB1/+).